The primary structure comprises 246 residues: Large ribosomal subunit protein uL3 (246 aa).

Positions 140-162 are disordered; that stretch reads SHRSIGSTGGRQDPGKTFKNKKM. Position 151 is an N5-methylglutamine (Gln-151).

Belongs to the universal ribosomal protein uL3 family. As to quaternary structure, part of the 50S ribosomal subunit. Forms a cluster with proteins L14 and L19. Post-translationally, methylated by PrmB.

One of the primary rRNA binding proteins, it binds directly near the 3'-end of the 23S rRNA, where it nucleates assembly of the 50S subunit. The polypeptide is Large ribosomal subunit protein uL3 (Methylobacterium sp. (strain 4-46)).